The sequence spans 131 residues: Profilin-5 (131 aa).

Cysteine 13 and cysteine 115 form a disulfide bridge. The Involved in PIP2 interaction motif lies at 81 to 97; that stretch reads AVIRGKKGAGGITVKKT. Threonine 111 bears the Phosphothreonine mark.

This sequence belongs to the profilin family. Occurs in many kinds of cells as a complex with monomeric actin in a 1:1 ratio. In terms of processing, phosphorylated by MAP kinases.

The protein resides in the cytoplasm. The protein localises to the cytoskeleton. Binds to actin and affects the structure of the cytoskeleton. At high concentrations, profilin prevents the polymerization of actin, whereas it enhances it at low concentrations. The polypeptide is Profilin-5 (Corylus avellana (European hazel)).